A 325-amino-acid polypeptide reads, in one-letter code: Tagatose 1,6-diphosphate aldolase 1 (325 aa).

This sequence belongs to the aldolase LacD family.

It carries out the reaction D-tagatofuranose 1,6-bisphosphate = D-glyceraldehyde 3-phosphate + dihydroxyacetone phosphate. It participates in carbohydrate metabolism; D-tagatose 6-phosphate degradation; D-glyceraldehyde 3-phosphate and glycerone phosphate from D-tagatose 6-phosphate: step 2/2. The polypeptide is Tagatose 1,6-diphosphate aldolase 1 (lacD1) (Enterococcus faecalis (strain ATCC 700802 / V583)).